The following is a 320-amino-acid chain: Probable NAD(P)H-dependent D-xylose reductase xyl1 (320 aa).

Tyr50 acts as the Proton donor in catalysis. Substrate is bound at residue His112. NAD(+)-binding positions include 167–168 (SN), 216–225 (SSFGPLSFLE), and 272–282 (KSNNPTRLSQN).

This sequence belongs to the aldo/keto reductase family.

The catalysed reaction is xylitol + NAD(+) = D-xylose + NADH + H(+). The enzyme catalyses xylitol + NADP(+) = D-xylose + NADPH + H(+). It functions in the pathway carbohydrate metabolism; D-xylose degradation. In terms of biological role, catalyzes the initial reaction in the xylose utilization pathway by reducing D-xylose into xylitol. Xylose is a major component of hemicelluloses such as xylan. Most fungi utilize D-xylose via three enzymatic reactions, xylose reductase (XR), xylitol dehydrogenase (XDH), and xylulokinase, to form xylulose 5-phosphate, which enters pentose phosphate pathway. The chain is Probable NAD(P)H-dependent D-xylose reductase xyl1 (xyl1) from Aspergillus terreus (strain NIH 2624 / FGSC A1156).